Here is an 85-residue protein sequence, read N- to C-terminus: Toxin 3FTx-Lei1 (85 aa).

Residues 1–21 (MKTLLLSLVVVTFVCLDLAHT) form the signal peptide. Intrachain disulfides connect cysteine 24–cysteine 45, cysteine 27–cysteine 32, cysteine 38–cysteine 63, cysteine 67–cysteine 78, and cysteine 79–cysteine 84.

This sequence belongs to the three-finger toxin family. Ancestral subfamily. As to expression, expressed by the venom gland.

It localises to the secreted. In Leioheterodon madagascariensis (Malagasy giant hognose snake), this protein is Toxin 3FTx-Lei1.